We begin with the raw amino-acid sequence, 363 residues long: LIM and cysteine-rich domains protein 1 (363 aa).

Position 16 is a phosphoserine (Ser-16). Residues 99 to 206 (MIMTNPIATG…GEVALPGQGG (108 aa)) form the PET domain. The disordered stretch occupies residues 200 to 234 (ALPGQGGLPKEEGKQQEKPEGAETAPPTTNGSIGD). Residues 208–220 (PKEEGKQQEKPEG) are compositionally biased toward basic and acidic residues. LIM zinc-binding domains follow at residues 239–304 (YVCE…SLRP) and 305–363 (RCSG…SKRS).

Interacts with beta-dystroglycan. Interacts with GATA1, GATA4 and GATA6.

The protein resides in the cytoplasm. It is found in the nucleus. In terms of biological role, transcriptional cofactor that restricts GATA6 function by inhibiting DNA-binding, resulting in repression of GATA6 transcriptional activation of downstream target genes. Represses GATA6-mediated trans activation of lung- and cardiac tissue-specific promoters. Inhibits DNA-binding by GATA4 and GATA1 to the cTNC promoter. Plays a critical role in the development of cardiac hypertrophy via activation of calcineurin/nuclear factor of activated T-cells signaling pathway. This Bos taurus (Bovine) protein is LIM and cysteine-rich domains protein 1 (LMCD1).